The sequence spans 337 residues: MAAGAAEAGEAAVAVVEVGSAQQFEELLRLKTKSLLVVHFWAPWAPQCVQMNDVMAELAKEHPHVSFVKLEAEAVPEVSEKYEISSVPTFLFFKNSQKVDRLDGAHAPELTKKVQRHVSSGAFPPSTNEHLKEDLSLRLKKLTHAAPCMLFMKGTPQEPRCGFSKQMVEILHKHNIQFSSFDIFSDEEVRQGLKTYSNWPTYPQLYVSGELIGGLDIIKELEASEELDTICPKAPKLEERLKVLTNKASVMLFMKGNKQEAKCGFSKQILEILNSTGVEYETFDILEDEEVRQGLKTFSNWPTYPQLYVRGDLVGGLDIVKELKDNGELLPILKGEN.

Residue A2 is modified to N-acetylalanine. Residues 2–119 (AAGAAEAGEA…LTKKVQRHVS (118 aa)) form the Thioredoxin domain. Position 119 is a phosphoserine (S119). 2 Glutaredoxin domains span residues 144–238 (HAAP…PKLE) and 239–337 (ERLK…KGEN). [2Fe-2S] cluster is bound by residues C161 and C263.

As to quaternary structure, homodimer; the homodimer is independent of 2Fe-2S clusters. Heterotrimer; forms a heterotrimeric complex composed by two BOLA2 molecules and one GLRX3 molecule; linked by [2Fe-2S] clusters. Interacts (via N-terminus) with PRKCQ/PKC-theta. Interacts (via C-terminus) with CSRP3. Interacts with CSRP2.

It is found in the cytoplasm. The protein resides in the cytosol. The protein localises to the cell cortex. It localises to the myofibril. Its subcellular location is the sarcomere. It is found in the z line. Functionally, together with BOLA2, acts as a cytosolic iron-sulfur (Fe-S) cluster assembly factor that facilitates [2Fe-2S] cluster insertion into a subset of cytosolic proteins. Acts as a critical negative regulator of cardiac hypertrophy and a positive inotropic regulator. Required for hemoglobin maturation. Does not possess any thyoredoxin activity since it lacks the conserved motif that is essential for catalytic activity. This chain is Glutaredoxin-3 (Glrx3), found in Mus musculus (Mouse).